Reading from the N-terminus, the 1388-residue chain is Rho-associated protein kinase 2 (1388 aa).

The interval 1-26 (MSRPPPTGKMPGAPEAAPGDGAGAGR) is disordered. One can recognise a Protein kinase domain in the interval 92–354 (YDVVKVIGRG…VEEIKQHPFF (263 aa)). ATP contacts are provided by residues 98 to 106 (IGRGAFGEV) and Lys121. The active-site Proton acceptor is Asp214. Residues 357–425 (DQWNWDNIRE…FRENLLLSDS (69 aa)) enclose the AGC-kinase C-terminal domain. Positions 363 to 784 (NIRETAAPVV…LNELLKQKDV (422 aa)) are interaction with PPP1R12A. Positions 373–420 (PELSSDIDSSNFDDIEDDKGDVETFPIPKAFVGNQLPFIGFTYFRENL) are interaction with NPM1. At Thr414 the chain carries Phosphothreonine; by ROCK2. A coiled-coil region spans residues 439–1131 (SEESQEIQKK…QLQALHIGMD (693 aa)). The REM-1 domain occupies 497-573 (TLRQLEREKA…LDEANALLRT (77 aa)). The span at 512–530 (NAEYQRKADHEADKKRNLE) shows a compositional bias: basic and acidic residues. Positions 512 to 532 (NAEYQRKADHEADKKRNLEND) are disordered. Tyr722 carries the phosphotyrosine; by SRC modification. The region spanning 979-1047 (TSDVANLANE…LAEIMNRKEP (69 aa)) is the RhoBD domain. An RHOA binding region spans residues 979–1047 (TSDVANLANE…LAEIMNRKEP (69 aa)). Ser1137 carries the post-translational modification Phosphoserine. The PH domain occupies 1150–1349 (ESRLEGWLSL…WVSRLVKKIP (200 aa)). Thr1212 bears the Phosphothreonine mark. The segment at 1260–1315 (GHEFIPTLYHFPTNCEACMKPLWHMFKPPPALECRRCHIKCHKDHMDKKEEIIAPC) adopts a Phorbol-ester/DAG-type zinc-finger fold. A disordered region spans residues 1345–1388 (VKKIPKKPPAPDPFARSSPRTSMKIQQNQSIRRPSRQLAPNKPS). Phosphoserine occurs at positions 1362 and 1374. The span at 1362–1376 (SPRTSMKIQQNQSIR) shows a compositional bias: polar residues.

It belongs to the protein kinase superfamily. AGC Ser/Thr protein kinase family. As to quaternary structure, homodimer. Interacts with IRS1. Interacts with RAF1. Interacts with RHOA (activated by GTP), RHOB and RHOC. Interacts with PPP1R12A. Interacts with EP300. Interacts with CHORDC1. Interacts with BRCA2. Interacts with NPM1; this interaction enhances ROCK2 activity. Interacts with SORL1. Interacts with PJVK. Mg(2+) serves as cofactor. Autophosphorylated. Phosphorylation at Tyr-722 reduces its binding to RHOA and is crucial for focal adhesion dynamics. Dephosphorylation by PTPN11 stimulates its RHOA binding activity. In terms of processing, cleaved by granzyme B during apoptosis. This leads to constitutive activation of the kinase and membrane blebbing. In terms of tissue distribution, highly expressed in brain, heart, lung, liver, stomach, spleen, kidney, testis, muscle, embryo and placenta. Isoform 2 is expressed predominantly in the skeletal muscle.

The protein resides in the cytoplasm. The protein localises to the cell membrane. Its subcellular location is the nucleus. It is found in the cytoskeleton. It localises to the microtubule organizing center. The protein resides in the centrosome. It catalyses the reaction L-seryl-[protein] + ATP = O-phospho-L-seryl-[protein] + ADP + H(+). It carries out the reaction L-threonyl-[protein] + ATP = O-phospho-L-threonyl-[protein] + ADP + H(+). With respect to regulation, activated by RHOA binding. Inhibited by Y-27632. In terms of biological role, protein kinase which is a key regulator of actin cytoskeleton and cell polarity. Involved in regulation of smooth muscle contraction, actin cytoskeleton organization, stress fiber and focal adhesion formation, neurite retraction, cell adhesion and motility via phosphorylation of ADD1, BRCA2, CNN1, EZR, DPYSL2, EP300, MSN, MYL9/MLC2, NPM1, RDX, PPP1R12A and VIM. Phosphorylates SORL1 and IRF4. Acts as a negative regulator of VEGF-induced angiogenic endothelial cell activation. Positively regulates the activation of p42/MAPK1-p44/MAPK3 and of p90RSK/RPS6KA1 during myogenic differentiation. Plays an important role in the timely initiation of centrosome duplication. Inhibits keratinocyte terminal differentiation. May regulate closure of the eyelids and ventral body wall through organization of actomyosin bundles. Plays a critical role in the regulation of spine and synaptic properties in the hippocampus. Plays a role in placental homeostasis during the perinatal period. Plays an important role in generating the circadian rhythm of the aortic myofilament Ca(2+) sensitivity and vascular contractility by modulating the myosin light chain phosphorylation. The sequence is that of Rho-associated protein kinase 2 (Rock2) from Mus musculus (Mouse).